Consider the following 246-residue polypeptide: tRNA (guanine-N(1)-)-methyltransferase (246 aa).

Residues Gly114 and 134–139 (IGDYIL) contribute to the S-adenosyl-L-methionine site.

It belongs to the RNA methyltransferase TrmD family. As to quaternary structure, homodimer.

It localises to the cytoplasm. It carries out the reaction guanosine(37) in tRNA + S-adenosyl-L-methionine = N(1)-methylguanosine(37) in tRNA + S-adenosyl-L-homocysteine + H(+). In terms of biological role, specifically methylates guanosine-37 in various tRNAs. In Coxiella burnetii (strain RSA 331 / Henzerling II), this protein is tRNA (guanine-N(1)-)-methyltransferase.